A 384-amino-acid chain; its full sequence is Neuropeptide Y receptor type 2 (384 aa).

Residues 1–54 (MKMGPLGAEADENQTVEEMKVDQFGPGHTTLPGELAPDSEPELIDSTKLIEVQV) are Extracellular-facing. N-linked (GlcNAc...) asparagine glycosylation occurs at Asn-13. The chain crosses the membrane as a helical span at residues 55-75 (VLILAYCSIILLGVIGNSLVI). Residues 76 to 89 (HVVIKFKSMRTVTN) lie on the Cytoplasmic side of the membrane. A helical membrane pass occupies residues 90–110 (FFIANLAVADLLVNTLCLPFT). The Extracellular portion of the chain corresponds to 111–127 (LTYTLMGEWKMGPVLCH). Cysteines 126 and 206 form a disulfide. The chain crosses the membrane as a helical span at residues 128 to 148 (LVPYAQGLAVQVSTITLTVIA). The Cytoplasmic segment spans residues 149-168 (LDRHRCIVYHLESKISKQIS). The chain crosses the membrane as a helical span at residues 169–189 (FLIIGLAWGVSALLASPLAIF). Over 190–219 (REYSLIEIIPDFEIVACTEKWPGEEKGIYG) the chain is Extracellular. Residues 220 to 240 (TIYSLSSLLILYVLPLGIISF) traverse the membrane as a helical segment. The Cytoplasmic segment spans residues 241-271 (SYTRIWSKLKNHVSPGAAHDHYHQRRQKTTK). Residues 272–292 (MLVCVVVVFAVSWLPLHAFQL) traverse the membrane as a helical segment. At 293–307 (AVDIDSHVLDLKEYK) the chain is on the extracellular side. A helical membrane pass occupies residues 308–328 (LIFTVFHIIAMCSTFANPLLY). Residues 329–384 (GWMNSNYRKAFLSAFRCEQRLDAIHSEVSVTFKAKKHLQVTKNNGPNDSFTETTNV) lie on the Cytoplasmic side of the membrane. A lipid anchor (S-palmitoyl cysteine) is attached at Cys-345.

The protein belongs to the G-protein coupled receptor 1 family.

Its subcellular location is the cell membrane. Its function is as follows. Receptor for neuropeptide Y and peptide YY. The sequence is that of Neuropeptide Y receptor type 2 (NPY2R) from Bos taurus (Bovine).